We begin with the raw amino-acid sequence, 369 residues long: Small ribosomal subunit biogenesis GTPase RsgA (369 aa).

In terms of domain architecture, CP-type G spans Arg88–Pro246. Residues Asn137–Asp140 and Gly188–Ser196 contribute to the GTP site. Zn(2+) is bound by residues Cys271, Cys276, His278, and Cys284. The interval Gln307–Glu369 is disordered. The segment covering Thr359–Glu369 has biased composition (acidic residues).

This sequence belongs to the TRAFAC class YlqF/YawG GTPase family. RsgA subfamily. In terms of assembly, monomer. Associates with 30S ribosomal subunit, binds 16S rRNA. It depends on Zn(2+) as a cofactor.

Its subcellular location is the cytoplasm. Functionally, one of several proteins that assist in the late maturation steps of the functional core of the 30S ribosomal subunit. Helps release RbfA from mature subunits. May play a role in the assembly of ribosomal proteins into the subunit. Circularly permuted GTPase that catalyzes slow GTP hydrolysis, GTPase activity is stimulated by the 30S ribosomal subunit. The polypeptide is Small ribosomal subunit biogenesis GTPase RsgA (Synechocystis sp. (strain ATCC 27184 / PCC 6803 / Kazusa)).